The chain runs to 262 residues: Small ribosomal subunit protein uS2 (262 aa).

A disordered region spans residues 224 to 262 (GKQGQDDAQQETADDNAANETVSEDSLKNLKNSVEGKED).

This sequence belongs to the universal ribosomal protein uS2 family.

The sequence is that of Small ribosomal subunit protein uS2 from Limosilactobacillus reuteri (strain DSM 20016) (Lactobacillus reuteri).